We begin with the raw amino-acid sequence, 452 residues long: Type II methyltransferase M.EcaI (452 aa).

It belongs to the N(4)/N(6)-methyltransferase family.

The catalysed reaction is a 2'-deoxyadenosine in DNA + S-adenosyl-L-methionine = an N(6)-methyl-2'-deoxyadenosine in DNA + S-adenosyl-L-homocysteine + H(+). A beta subtype methylase, recognizes the double-stranded sequence 5'-GGTNACC-3', methylates A-5 on both strands and protects the DNA from cleavage by the EcaI endonuclease. The sequence is that of Type II methyltransferase M.EcaI (ecaIM) from Enterobacter cloacae.